A 440-amino-acid polypeptide reads, in one-letter code: Probable pectate lyase 10 (440 aa).

Positions 1–28 are cleaved as a signal peptide; the sequence is MVIFSRSFLALSTTLIILALCINSSTMA. The segment at 32–56 is disordered; the sequence is EDLNSHSSSNSSTANKLPNDDGAWN. N-linked (GlcNAc...) asparagine glycans are attached at residues Asn-41 and Asn-76. Residues Asp-238, Asp-262, and Asp-266 each contribute to the Ca(2+) site. Residue Arg-318 is part of the active site.

It belongs to the polysaccharide lyase 1 family. It depends on Ca(2+) as a cofactor.

The catalysed reaction is Eliminative cleavage of (1-&gt;4)-alpha-D-galacturonan to give oligosaccharides with 4-deoxy-alpha-D-galact-4-enuronosyl groups at their non-reducing ends.. The protein operates within glycan metabolism; pectin degradation; 2-dehydro-3-deoxy-D-gluconate from pectin: step 2/5. The polypeptide is Probable pectate lyase 10 (Arabidopsis thaliana (Mouse-ear cress)).